The sequence spans 456 residues: 3-isopropylmalate dehydratase large subunit (456 aa).

Residues Cys336, Cys396, and Cys399 each contribute to the [4Fe-4S] cluster site.

Belongs to the aconitase/IPM isomerase family. LeuC type 1 subfamily. In terms of assembly, heterodimer of LeuC and LeuD. [4Fe-4S] cluster serves as cofactor.

It carries out the reaction (2R,3S)-3-isopropylmalate = (2S)-2-isopropylmalate. Its pathway is amino-acid biosynthesis; L-leucine biosynthesis; L-leucine from 3-methyl-2-oxobutanoate: step 2/4. Its function is as follows. Catalyzes the isomerization between 2-isopropylmalate and 3-isopropylmalate, via the formation of 2-isopropylmaleate. The polypeptide is 3-isopropylmalate dehydratase large subunit (Staphylococcus epidermidis (strain ATCC 35984 / DSM 28319 / BCRC 17069 / CCUG 31568 / BM 3577 / RP62A)).